The chain runs to 253 residues: UPF0246 protein LBA1843 (253 aa).

It belongs to the UPF0246 family.

The chain is UPF0246 protein LBA1843 from Lactobacillus acidophilus (strain ATCC 700396 / NCK56 / N2 / NCFM).